The following is a 366-amino-acid chain: Aminomethyltransferase (366 aa).

This sequence belongs to the GcvT family. As to quaternary structure, the glycine cleavage system is composed of four proteins: P, T, L and H.

It carries out the reaction N(6)-[(R)-S(8)-aminomethyldihydrolipoyl]-L-lysyl-[protein] + (6S)-5,6,7,8-tetrahydrofolate = N(6)-[(R)-dihydrolipoyl]-L-lysyl-[protein] + (6R)-5,10-methylene-5,6,7,8-tetrahydrofolate + NH4(+). The glycine cleavage system catalyzes the degradation of glycine. This is Aminomethyltransferase from Bordetella parapertussis (strain 12822 / ATCC BAA-587 / NCTC 13253).